We begin with the raw amino-acid sequence, 651 residues long: Bromodomain-containing protein 7 (651 aa).

Disordered regions lie at residues 36–133 (ELST…EVEQ) and 257–298 (KDKV…KKKD). A compositionally biased stretch (basic residues) spans 58-69 (HKDRKRKKRKKG). The short motif at 65 to 96 (KRKKGEKQVPGEEKEKRKRKVKEDKRKRDREH) is the Nuclear localization signal element. The span at 70–105 (EKQVPGEEKEKRKRKVKEDKRKRDREHPDSEGEQEL) shows a compositional bias: basic and acidic residues. The Bromo domain occupies 131–235 (VEQTPLQEAL…HSGMKILSQE (105 aa)). The span at 271 to 298 (GSGKDKGEPVDGDTKAFKTPNKEHKKKD) shows a compositional bias: basic and acidic residues. The stretch at 533 to 564 (SEEAEIFQRKLDETTKLLRELQDAQNERLSTK) forms a coiled coil.

The protein localises to the nucleus. It localises to the chromosome. In terms of biological role, acts both as coactivator and as corepressor. May play a role in chromatin remodeling. Participates in the Wnt signaling pathway. Transcriptional corepressor that down-regulates the expression of target genes. Binds to target promoters, leading to increased histone H3 acetylation. Coactivator for TP53-mediated activation of transcription of a set of target genes. Required for TP53-mediated cell-cycle arrest in response to oncogene activation. Inhibits cell cycle progression from G1 to S phase. In Gallus gallus (Chicken), this protein is Bromodomain-containing protein 7 (BRD7).